Reading from the N-terminus, the 251-residue chain is Hydroxyacylglutathione hydrolase (251 aa).

Histidine 53, histidine 55, aspartate 57, histidine 58, histidine 110, aspartate 127, and histidine 165 together coordinate Zn(2+).

It belongs to the metallo-beta-lactamase superfamily. Glyoxalase II family. As to quaternary structure, monomer. Zn(2+) is required as a cofactor.

The catalysed reaction is an S-(2-hydroxyacyl)glutathione + H2O = a 2-hydroxy carboxylate + glutathione + H(+). It participates in secondary metabolite metabolism; methylglyoxal degradation; (R)-lactate from methylglyoxal: step 2/2. In terms of biological role, thiolesterase that catalyzes the hydrolysis of S-D-lactoyl-glutathione to form glutathione and D-lactic acid. The chain is Hydroxyacylglutathione hydrolase from Yersinia enterocolitica serotype O:8 / biotype 1B (strain NCTC 13174 / 8081).